A 188-amino-acid chain; its full sequence is UPF0301 protein azo3459 (188 aa).

Belongs to the UPF0301 (AlgH) family.

The protein is UPF0301 protein azo3459 of Azoarcus sp. (strain BH72).